The following is an 89-amino-acid chain: Small ribosomal subunit protein uS15 (89 aa).

The protein belongs to the universal ribosomal protein uS15 family. Part of the 30S ribosomal subunit. Forms a bridge to the 50S subunit in the 70S ribosome, contacting the 23S rRNA.

In terms of biological role, one of the primary rRNA binding proteins, it binds directly to 16S rRNA where it helps nucleate assembly of the platform of the 30S subunit by binding and bridging several RNA helices of the 16S rRNA. Functionally, forms an intersubunit bridge (bridge B4) with the 23S rRNA of the 50S subunit in the ribosome. The polypeptide is Small ribosomal subunit protein uS15 (Streptococcus uberis (strain ATCC BAA-854 / 0140J)).